Reading from the N-terminus, the 384-residue chain is MSWQEKINAALDARRAADALRRRYPVAQGAGRWLVADDRQYLNFSSNDYLGLSHHPQIIRAWKQGAEQFGVGSGGSGHVSGYSVAHQALEEELAEWLGYSRALLFISGFAANQAVIAAMMAKEDRIVADRLSHASLLEAASLSPSQLRRFVHNDVTHLARLLASPCPGQQLVVTEGVFSMDGDSAPLAEIQQVTQQHNGWLMVDDAHGTGVIGEQGRGTCWLQKVKPELLVVTFGKGFGVSGAAVLCSSTVADYLLQFARHLIYSTSMPPAQAQALRASLAVIRSDEGDARREKLAALITRFRAGVQDLPFTLADSCSAIQPLIVGDNSRALQLAEKLRQQGCWVTAIRPPTVPSGTARLRLTLTAAHEMQDIDRLLEVLHGNG.

A substrate-binding site is contributed by arginine 21. 108 to 109 is a binding site for pyridoxal 5'-phosphate; sequence GF. Histidine 133 contacts substrate. Positions 179, 207, and 233 each coordinate pyridoxal 5'-phosphate. Lysine 236 carries the post-translational modification N6-(pyridoxal phosphate)lysine. Threonine 352 contributes to the substrate binding site.

This sequence belongs to the class-II pyridoxal-phosphate-dependent aminotransferase family. BioF subfamily. In terms of assembly, homodimer. Pyridoxal 5'-phosphate serves as cofactor.

It carries out the reaction 6-carboxyhexanoyl-[ACP] + L-alanine + H(+) = (8S)-8-amino-7-oxononanoate + holo-[ACP] + CO2. The protein operates within cofactor biosynthesis; biotin biosynthesis. Functionally, catalyzes the decarboxylative condensation of pimeloyl-[acyl-carrier protein] and L-alanine to produce 8-amino-7-oxononanoate (AON), [acyl-carrier protein], and carbon dioxide. This chain is 8-amino-7-oxononanoate synthase, found in Escherichia coli O157:H7.